Consider the following 310-residue polypeptide: 5'-adenylylsulfate reductase-like 4 (310 aa).

The signal sequence occupies residues 1 to 22; it reads MEKEILLLLLVIMFLTVADVDA. Positions 49–168 constitute a Thioredoxin domain; sequence GVESDERPRF…LVAFYSDVTG (120 aa). 2 N-linked (GlcNAc...) asparagine glycosylation sites follow: Asn-143 and Asn-190. A helical transmembrane segment spans residues 217–237; sequence LAIVFVLLRLLHLIYPTLVVF.

The protein localises to the membrane. The chain is 5'-adenylylsulfate reductase-like 4 (APRL4) from Arabidopsis thaliana (Mouse-ear cress).